Reading from the N-terminus, the 279-residue chain is MVDHLANTEINSQRIAAVESCFGASGQPLALPGRVLLGEGVLTKECRKKAKPRIFFLFNDILVYGSIVLSKRKYRSQHIIPLEEVTLEPLPETLQAKNRWMIKTAKKSFVVSAASTTERQEWISHIEECVRRQLLATGRQPTTEHAAPWIPDKATDICMRCTQTRFSALTRRHHCRKCGFVVCAECSRERFLLPRLSPKPLRVCSLCYRELAAQKLREEAREGIGGSPPQLSHLGGTVCGASSGDDDDSDEDREGNGDGDWPTQVEFYASGVSWSAFHS.

The PH domain occupies 35–131 (VLLGEGVLTK…WISHIEECVR (97 aa)). The FYVE-type zinc-finger motif lies at 152 to 212 (DKATDICMRC…VCSLCYRELA (61 aa)). Zn(2+) contacts are provided by Cys-158, Cys-161, Cys-175, Cys-178, Cys-183, Cys-186, Cys-204, and Cys-207. Residues 220–263 (AREGIGGSPPQLSHLGGTVCGASSGDDDDSDEDREGNGDGDWPT) form a disordered region. Positions 244–253 (GDDDDSDEDR) are enriched in acidic residues.

Widely expressed.

Its subcellular location is the nucleus. The protein resides in the cytoplasm. It localises to the perinuclear region. It is found in the lysosome. In terms of biological role, may induce apoptosis through the lysosomal-mitochondrial pathway. Translocates to the lysosome initiating the permeabilization of lysosomal membrane (LMP) and resulting in the release of CTSD and CTSL to the cytoplasm. Triggers the caspase-independent apoptosis by altering mitochondrial membrane permeabilization (MMP) resulting in the release of PDCD8. The sequence is that of Pleckstrin homology domain-containing family F member 1 (Plekhf1) from Mus musculus (Mouse).